Reading from the N-terminus, the 160-residue chain is Cytochrome b6-f complex subunit 4 (160 aa).

The next 3 helical transmembrane spans lie at 36–56, 95–115, and 131–151; these read LLYV…ALAV, LLGV…PFIE, and TVFL…ALPL.

It belongs to the cytochrome b family. PetD subfamily. As to quaternary structure, the 4 large subunits of the cytochrome b6-f complex are cytochrome b6, subunit IV (17 kDa polypeptide, PetD), cytochrome f and the Rieske protein, while the 4 small subunits are PetG, PetL, PetM and PetN. The complex functions as a dimer.

Its subcellular location is the cellular thylakoid membrane. Component of the cytochrome b6-f complex, which mediates electron transfer between photosystem II (PSII) and photosystem I (PSI), cyclic electron flow around PSI, and state transitions. This is Cytochrome b6-f complex subunit 4 from Desmonostoc sp. (strain PCC 7906) (Nostoc sp. (strain PCC 7906)).